Reading from the N-terminus, the 140-residue chain is Large-conductance mechanosensitive channel (140 aa).

2 helical membrane-spanning segments follow: residues 16–36 (VIDL…VTAL) and 84–104 (INTV…VKLI).

This sequence belongs to the MscL family. Homopentamer.

The protein resides in the cell inner membrane. Channel that opens in response to stretch forces in the membrane lipid bilayer. May participate in the regulation of osmotic pressure changes within the cell. The sequence is that of Large-conductance mechanosensitive channel from Xanthomonas oryzae pv. oryzae (strain PXO99A).